A 508-amino-acid chain; its full sequence is Citrate lyase alpha chain (508 aa).

As to quaternary structure, oligomer with a subunit composition of (alpha,beta,gamma)6.

The protein localises to the cytoplasm. It carries out the reaction citrate = oxaloacetate + acetate. It catalyses the reaction citrate + acetyl-CoA = (3S)-citryl-CoA + acetate. In terms of biological role, represents a citrate:acetyl-ACP transferase. The polypeptide is Citrate lyase alpha chain (citF) (Klebsiella pneumoniae).